The sequence spans 232 residues: Phosphoribosylformylglycinamidine synthase subunit PurQ (232 aa).

The 231-residue stretch at 2 to 232 folds into the Glutamine amidotransferase type-1 domain; it reads KIAIIQFGGT…SMADYITENF (231 aa). C86 serves as the catalytic Nucleophile. Active-site residues include H203 and E205.

Part of the FGAM synthase complex composed of 1 PurL, 1 PurQ and 2 PurS subunits.

The protein localises to the cytoplasm. The catalysed reaction is N(2)-formyl-N(1)-(5-phospho-beta-D-ribosyl)glycinamide + L-glutamine + ATP + H2O = 2-formamido-N(1)-(5-O-phospho-beta-D-ribosyl)acetamidine + L-glutamate + ADP + phosphate + H(+). It carries out the reaction L-glutamine + H2O = L-glutamate + NH4(+). The protein operates within purine metabolism; IMP biosynthesis via de novo pathway; 5-amino-1-(5-phospho-D-ribosyl)imidazole from N(2)-formyl-N(1)-(5-phospho-D-ribosyl)glycinamide: step 1/2. Its function is as follows. Part of the phosphoribosylformylglycinamidine synthase complex involved in the purines biosynthetic pathway. Catalyzes the ATP-dependent conversion of formylglycinamide ribonucleotide (FGAR) and glutamine to yield formylglycinamidine ribonucleotide (FGAM) and glutamate. The FGAM synthase complex is composed of three subunits. PurQ produces an ammonia molecule by converting glutamine to glutamate. PurL transfers the ammonia molecule to FGAR to form FGAM in an ATP-dependent manner. PurS interacts with PurQ and PurL and is thought to assist in the transfer of the ammonia molecule from PurQ to PurL. This Methanosarcina mazei (strain ATCC BAA-159 / DSM 3647 / Goe1 / Go1 / JCM 11833 / OCM 88) (Methanosarcina frisia) protein is Phosphoribosylformylglycinamidine synthase subunit PurQ.